Consider the following 175-residue polypeptide: Large ribosomal subunit protein uL15 (175 aa).

Disordered stretches follow at residues 1-65 (MSTL…LPKF) and 155-175 (PESA…QPKA). Positions 12–21 (RSWHRKKRVG) are enriched in basic residues. A compositionally biased stretch (gly residues) spans 22-38 (RGQGSGLGKTAGRGGKG). Residues 160–169 (KAHAGKGVKA) show a composition bias toward low complexity.

The protein belongs to the universal ribosomal protein uL15 family. As to quaternary structure, part of the 50S ribosomal subunit.

In terms of biological role, binds to the 23S rRNA. This Myxococcus xanthus (strain DK1622) protein is Large ribosomal subunit protein uL15.